The sequence spans 207 residues: Suppressor of IKBKE 1 (207 aa).

Coiled-coil stretches lie at residues 70–102 (HILL…DALE) and 162–193 (QFCK…SLQA).

This sequence belongs to the SIKE family. In terms of assembly, interacts with IKBKE and TBK1 via its coiled coil region. Interaction with TBK1 is disrupted upon viral infection or TLR3 stimulation. Interacts with CDC42BPB. Interacts with SIKE1 which mediates association with the STRIPAK core complex composed of PP2A catalytic and scaffolding subunits, the striatins (PP2A regulatory subunits), the striatin-associated proteins MOB4, STRIP1 and STRIP2, PDCD10 and members of the STE20 kinases, such as STK24 and STK26. In terms of tissue distribution, widely expressed. Expressed in brain, heart, skeletal muscle, colon, thymus, spleen, kidney, liver, small intestine, placenta, lung and leukocytes. Present in all cell lines tested (at protein level).

It is found in the cytoplasm. Functionally, physiological suppressor of IKK-epsilon and TBK1 that plays an inhibitory role in virus- and TLR3-triggered IRF3. Inhibits TLR3-mediated activation of interferon-stimulated response elements (ISRE) and the IFN-beta promoter. May act by disrupting the interactions of IKBKE or TBK1 with TICAM1/TRIF, IRF3 and RIGI. Does not inhibit NF-kappa-B activation pathways. Associates with the striatin-interacting phosphatase and kinase (STRIPAK) core complex, forming the extended (SIKE1:SLMAP)STRIPAK complex. The (SIKE1:SLMAP)STRIPAK complex dephosphorylates STK3 leading to the inhibition of Hippo signaling and the control of cell growth. The chain is Suppressor of IKBKE 1 from Homo sapiens (Human).